The following is a 174-amino-acid chain: MLSAADNLVRIINAVFLIISIGLISGLIGTQTKHSSRVNFCMFAAVYGLVTDSLYGFLANFWTSLTYPAILLVLDFLNFIFTFVAATALAVGIRCHSCKNKTYLEQNKIIQGSSSRCHQSQAAVAFFYFSCFLFLIKVTVATMGMMQNGGFGSNTGFSRRRARRQMGIPTISQV.

Topologically, residues 1-7 (MLSAADN) are cytoplasmic. A helical transmembrane segment spans residues 8 to 28 (LVRIINAVFLIISIGLISGLI). Residues 29 to 41 (GTQTKHSSRVNFC) lie on the Extracellular side of the membrane. Residues 42-62 (MFAAVYGLVTDSLYGFLANFW) form a helical membrane-spanning segment. Over 63-69 (TSLTYPA) the chain is Cytoplasmic. Residues 70-90 (ILLVLDFLNFIFTFVAATALA) traverse the membrane as a helical segment. The Extracellular portion of the chain corresponds to 91-122 (VGIRCHSCKNKTYLEQNKIIQGSSSRCHQSQA). The helical transmembrane segment at 123–143 (AVAFFYFSCFLFLIKVTVATM) threads the bilayer. Topologically, residues 144-174 (GMMQNGGFGSNTGFSRRRARRQMGIPTISQV) are cytoplasmic.

The protein belongs to the NCE102 family.

The protein localises to the cell membrane. In terms of biological role, involved in membrane organization. Required for the formation of membrane compartments of CAN1 (MCCs), localization of CAN1 at the MCCs and subsequent invagination of the plasma membrane at the MCCs sites. Involved in eisosome organization and might act as a sensor of sphingolipids that regulates plasma membrane function. Involved in a novel pathway of export of proteins that lack a cleavable signal sequence. Non-classical export pathway also functions as an alternative clearance/detoxification pathway to eliminate damaged material, when the basic repair pathway is not sufficient. The sequence is that of Non-classical export protein 2 homolog 1 (FHN1) from Saccharomyces cerevisiae (strain ATCC 204508 / S288c) (Baker's yeast).